Reading from the N-terminus, the 259-residue chain is Small ribosomal subunit protein uS2 (259 aa).

The segment at Lys232–Lys259 is disordered.

Belongs to the universal ribosomal protein uS2 family.

This is Small ribosomal subunit protein uS2 from Maridesulfovibrio salexigens (strain ATCC 14822 / DSM 2638 / NCIMB 8403 / VKM B-1763) (Desulfovibrio salexigens).